Here is a 674-residue protein sequence, read N- to C-terminus: Pannexin-2 (674 aa).

The Cytoplasmic segment spans residues 11–53 (MATALLAGEKLRELILPGSQDDKAGALAALLLQLKLELPFDRV). The helical transmembrane segment at 54–74 (VTIGTVLVPILLVTLVFTKNF) threads the bilayer. At 75 to 125 (AEEPIYCYTPHNFTRDQALYARGYCWTELRDALPGVDASLWPSLFEHKFLP) the chain is on the extracellular side. A glycan (N-linked (GlcNAc...) asparagine) is linked at Asn86. The chain crosses the membrane as a helical span at residues 126–146 (YALLAFAAIMYVPALGWEFLA). Residues 147-230 (STRLTSELNF…NFLAKLYLAR (84 aa)) lie on the Cytoplasmic side of the membrane. Residues 231–251 (HVLILLLSVVPISYLCTYYAT) form a helical membrane-spanning segment. At 252-295 (QKQNEFTCALGASPDGPVGSAGPTVRVSCKLPSVQLQRIIAGVD) the chain is on the extracellular side. A helical membrane pass occupies residues 296 to 316 (IVLLCFMNLIILVNLIHLFIF). The Cytoplasmic segment spans residues 317 to 674 (RKSNFIFDKL…PRTVVSTVEF (358 aa)). The span at 394 to 408 (TTPTVRDSGIQTVDP) shows a compositional bias: polar residues. Disordered stretches follow at residues 394-426 (TTPTVRDSGIQTVDPSINPAEPEGSAEPPVVKR) and 485-510 (AHHYKGSGGDTGPSSAPPAASEKKHT). A phosphoserine mark is found at Ser590 and Ser601.

The protein belongs to the pannexin family. As to quaternary structure, forms PANX1/PANX2-heteromeric intercellular channels on coexpression in paired Xenopus oocytes. Does not form homomeric channels. Post-translationally, S-palmitoylated in neural stem and progenitor cells. In terms of processing, cleaved by CASP3 and CASP7 during apoptosis. Cleavage has no effect on it function. As to expression, expressed in the eye, thyroid, prostate, kidney and liver. Abundantly expressed in the CNS, including hippocampus, olfactory bulb, cortex, cerebellum. Not detected in the white matter.

It localises to the cell membrane. Its subcellular location is the golgi apparatus membrane. The protein resides in the endoplasmic reticulum membrane. In terms of biological role, structural component of the gap junctions and the hemichannels. In Rattus norvegicus (Rat), this protein is Pannexin-2 (Panx2).